The following is a 156-amino-acid chain: N-glycosidase Npun_R5314 (156 aa).

It belongs to the YbiA family.

The enzyme catalyses 2,5-diamino-6-hydroxy-4-(5-phosphoribosylamino)-pyrimidine + H2O = 2,5,6-triamino-4-hydroxypyrimidine + D-ribose 5-phosphate. The catalysed reaction is 5-amino-6-(5-phospho-D-ribosylamino)uracil + H2O = 5,6-diaminouracil + D-ribose 5-phosphate. Functionally, catalyzes the hydrolysis of the N-glycosidic bond in the first two intermediates of riboflavin biosynthesis, which are highly reactive metabolites, yielding relatively innocuous products. Thus, can divert a surplus of harmful intermediates into relatively harmless products and pre-empt the damage these intermediates would otherwise do. May act on other substrates in vivo. Has no activity against GTP, nucleoside monophosphates or ADP-ribose. In Nostoc punctiforme (strain ATCC 29133 / PCC 73102), this protein is N-glycosidase Npun_R5314.